A 252-amino-acid polypeptide reads, in one-letter code: Chitooligosaccharide deacetylase (252 aa).

2 residues coordinate Mg(2+): His61 and His125.

This sequence belongs to the YdjC deacetylase family. ChbG subfamily. As to quaternary structure, homodimer. Requires Mg(2+) as cofactor.

It localises to the cytoplasm. It catalyses the reaction N,N'-diacetylchitobiose + H2O = N-acetyl-beta-D-glucosaminyl-(1-&gt;4)-D-glucosamine + acetate. The catalysed reaction is diacetylchitobiose-6'-phosphate + H2O = N'-monoacetylchitobiose-6'-phosphate + acetate. The protein operates within glycan degradation; chitin degradation. Functionally, involved in the degradation of chitin. ChbG is essential for growth on the acetylated chitooligosaccharides chitobiose and chitotriose but is dispensable for growth on cellobiose and chitosan dimer, the deacetylated form of chitobiose. Deacetylation of chitobiose-6-P and chitotriose-6-P is necessary for both the activation of the chb promoter by the regulatory protein ChbR and the hydrolysis of phosphorylated beta-glucosides by the phospho-beta-glucosidase ChbF. Catalyzes the removal of only one acetyl group from chitobiose-6-P to yield monoacetylchitobiose-6-P, the inducer of ChbR and the substrate of ChbF. This chain is Chitooligosaccharide deacetylase, found in Klebsiella pneumoniae (strain 342).